A 171-amino-acid chain; its full sequence is S-ribosylhomocysteine lyase (171 aa).

The Fe cation site is built by His-54, His-58, and Cys-128.

Belongs to the LuxS family. In terms of assembly, homodimer. The cofactor is Fe cation.

The catalysed reaction is S-(5-deoxy-D-ribos-5-yl)-L-homocysteine = (S)-4,5-dihydroxypentane-2,3-dione + L-homocysteine. Functionally, involved in the synthesis of autoinducer 2 (AI-2) which is secreted by bacteria and is used to communicate both the cell density and the metabolic potential of the environment. The regulation of gene expression in response to changes in cell density is called quorum sensing. Catalyzes the transformation of S-ribosylhomocysteine (RHC) to homocysteine (HC) and 4,5-dihydroxy-2,3-pentadione (DPD). This chain is S-ribosylhomocysteine lyase, found in Klebsiella pneumoniae (strain 342).